We begin with the raw amino-acid sequence, 320 residues long: Ferrochelatase (320 aa).

The Fe cation site is built by histidine 194 and glutamate 275.

The protein belongs to the ferrochelatase family. As to quaternary structure, monomer.

The protein resides in the cytoplasm. It catalyses the reaction heme b + 2 H(+) = protoporphyrin IX + Fe(2+). It functions in the pathway porphyrin-containing compound metabolism; protoheme biosynthesis; protoheme from protoporphyrin-IX: step 1/1. In terms of biological role, catalyzes the ferrous insertion into protoporphyrin IX. The chain is Ferrochelatase from Escherichia coli O45:K1 (strain S88 / ExPEC).